Consider the following 107-residue polypeptide: UPF0060 membrane protein glr4174 (107 aa).

4 helical membrane-spanning segments follow: residues 1–21, 26–46, 58–78, and 87–107; these read MALLLFGLAAAAEIGGCFAFW, LGKNPLWLAPGLVSLVVFAWL, AYAAYGGVYIAASLVWLWLVE, and LAGALLCLAGAAVILFADRSP.

It belongs to the UPF0060 family.

It localises to the cell inner membrane. This Gloeobacter violaceus (strain ATCC 29082 / PCC 7421) protein is UPF0060 membrane protein glr4174.